The sequence spans 215 residues: MWKWILTHCASAFPHLPGCCCCFLLLFLVSSVPVTCQALGQDMVSPEATNSSSSSSSSSSSSSFSSPSSAGRHVRSYNHLQGDVRWRKLFSFTKYFLKIEKNGKVSGTKKENCPYSILEITSVEIGVVAVKAINSNYYLAMNKKGKLYGSKEFNNDCKLKERIEENGYNTYASFNWQHNGRQMYVALNGKGAPRRGQKTRRKNTSAHFLPMVVHS.

Positions 1-36 are cleaved as a signal peptide; sequence MWKWILTHCASAFPHLPGCCCCFLLLFLVSSVPVTC. Residues 49-73 are disordered; it reads TNSSSSSSSSSSSSSFSSPSSAGRH. Asn-50 carries an N-linked (GlcNAc...) asparagine glycan. Positions 51–69 are enriched in low complexity; it reads SSSSSSSSSSSSSFSSPSS. Residue Asn-203 is glycosylated (N-linked (GlcNAc...) asparagine).

The protein belongs to the heparin-binding growth factors family. Interacts with FGFR1 and FGFR2. Interacts with FGFBP1. Preferentially expressed in the lung in adults.

The protein localises to the secreted. In terms of biological role, plays an important role in the regulation of embryonic development, cell proliferation and cell differentiation. Required for normal branching morphogenesis. May play a role in wound healing. In Rattus norvegicus (Rat), this protein is Fibroblast growth factor 10 (Fgf10).